A 149-amino-acid chain; its full sequence is Large ribosomal subunit protein bL9 (149 aa).

The protein belongs to the bacterial ribosomal protein bL9 family.

Binds to the 23S rRNA. This Actinobacillus pleuropneumoniae serotype 3 (strain JL03) protein is Large ribosomal subunit protein bL9.